Consider the following 113-residue polypeptide: MTSEQFEYHLTGKEILEKEFKTGLRGYNPEDVDEFLDMVIKDYSTFTQEIEALQAENIRLVQELDNAPVRTAPQPAPTFQAAAQPAGTTNFDILKRLSNLEKHVFGNKLDDND.

A coiled-coil region spans residues 36–68; sequence LDMVIKDYSTFTQEIEALQAENIRLVQELDNAP.

This sequence belongs to the GpsB family. As to quaternary structure, forms polymers through the coiled coil domains. Interacts with PBP1, MreC and EzrA.

Its subcellular location is the cytoplasm. Its function is as follows. Divisome component that associates with the complex late in its assembly, after the Z-ring is formed, and is dependent on DivIC and PBP2B for its recruitment to the divisome. Together with EzrA, is a key component of the system that regulates PBP1 localization during cell cycle progression. Its main role could be the removal of PBP1 from the cell pole after pole maturation is completed. Also contributes to the recruitment of PBP1 to the division complex. Not essential for septum formation. This Listeria welshimeri serovar 6b (strain ATCC 35897 / DSM 20650 / CCUG 15529 / CIP 8149 / NCTC 11857 / SLCC 5334 / V8) protein is Cell cycle protein GpsB.